The sequence spans 59 residues: Large ribosomal subunit protein bL32 (59 aa).

The tract at residues 1–59 (MAVQQNRKTRSKRGMRRSHDALSAAALSTDATTGEVHRRHHVSPDGFYRGKQVVEARDE) is disordered. A compositionally biased stretch (basic residues) spans 7–16 (RKTRSKRGMR). Residues 21–33 (ALSAAALSTDATT) show a composition bias toward low complexity.

It belongs to the bacterial ribosomal protein bL32 family.

This chain is Large ribosomal subunit protein bL32, found in Marinobacter nauticus (strain ATCC 700491 / DSM 11845 / VT8) (Marinobacter aquaeolei).